The primary structure comprises 291 residues: 4-hydroxy-tetrahydrodipicolinate synthase (291 aa).

Position 44 (threonine 44) interacts with pyruvate. Tyrosine 132 acts as the Proton donor/acceptor in catalysis. The active-site Schiff-base intermediate with substrate is lysine 160. Position 202 (isoleucine 202) interacts with pyruvate.

This sequence belongs to the DapA family. Homotetramer; dimer of dimers.

The protein localises to the cytoplasm. It carries out the reaction L-aspartate 4-semialdehyde + pyruvate = (2S,4S)-4-hydroxy-2,3,4,5-tetrahydrodipicolinate + H2O + H(+). Its pathway is amino-acid biosynthesis; L-lysine biosynthesis via DAP pathway; (S)-tetrahydrodipicolinate from L-aspartate: step 3/4. Catalyzes the condensation of (S)-aspartate-beta-semialdehyde [(S)-ASA] and pyruvate to 4-hydroxy-tetrahydrodipicolinate (HTPA). This Rhizorhabdus wittichii (strain DSM 6014 / CCUG 31198 / JCM 15750 / NBRC 105917 / EY 4224 / RW1) (Sphingomonas wittichii) protein is 4-hydroxy-tetrahydrodipicolinate synthase.